The sequence spans 72 residues: Cell division protein ZapB (72 aa).

Residues 2 to 72 adopt a coiled-coil conformation; that stretch reads SLEILDQLEG…RSLLGQIDNV (71 aa). A disordered region spans residues 34 to 57; the sequence is NQQAQQANDELRSENEQLKGEHNN. Residues 42–57 show a composition bias toward basic and acidic residues; it reads DELRSENEQLKGEHNN.

This sequence belongs to the ZapB family. As to quaternary structure, homodimer. The ends of the coiled-coil dimer bind to each other, forming polymers. Interacts with FtsZ.

It is found in the cytoplasm. In terms of biological role, non-essential, abundant cell division factor that is required for proper Z-ring formation. It is recruited early to the divisome by direct interaction with FtsZ, stimulating Z-ring assembly and thereby promoting cell division earlier in the cell cycle. Its recruitment to the Z-ring requires functional FtsA or ZipA. The chain is Cell division protein ZapB from Mannheimia succiniciproducens (strain KCTC 0769BP / MBEL55E).